The primary structure comprises 172 residues: Myosin regulatory light chain 12B (172 aa).

A compositionally biased stretch (basic residues) spans 1 to 16 (MSSKKAKTKTTKKRPQ). A disordered region spans residues 1–20 (MSSKKAKTKTTKKRPQRATS). A Phosphothreonine; by MLCK and ZIPK/DAPK3 modification is found at Thr19. Ser20 carries the post-translational modification Phosphoserine; by MLCK and ZIPK/DAPK3. 3 consecutive EF-hand domains span residues 29–64 (SQIQ…LGKN), 98–133 (DPED…MGDR), and 134–169 (FTDE…GAKD). Residues Asp42, Asn44, Asp46, and Asp53 each contribute to the Ca(2+) site.

Myosin is a hexamer of 2 heavy chains and 4 light chains: interacts with myosin heavy chain MYO19. In terms of processing, phosphorylation increases the actin-activated myosin ATPase activity and thereby regulates the contractile activity. It is required to generate the driving force in the migration of the cells but not necessary for localization of myosin-2 at the leading edge. Phosphorylation is reduced following epigallocatechin-3-O-gallate treatment. In terms of tissue distribution, ubiquitously expressed in various hematopoietic cells.

Its function is as follows. Myosin regulatory subunit that plays an important role in regulation of both smooth muscle and nonmuscle cell contractile activity via its phosphorylation. Phosphorylation triggers actin polymerization in vascular smooth muscle. Implicated in cytokinesis, receptor capping, and cell locomotion. The chain is Myosin regulatory light chain 12B (MYL12B) from Homo sapiens (Human).